The primary structure comprises 395 residues: Nicotinate phosphoribosyltransferase (395 aa).

Residue H222 is modified to Phosphohistidine; by autocatalysis.

This sequence belongs to the NAPRTase family. In terms of processing, transiently phosphorylated on a His residue during the reaction cycle. Phosphorylation strongly increases the affinity for substrates and increases the rate of nicotinate D-ribonucleotide production. Dephosphorylation regenerates the low-affinity form of the enzyme, leading to product release.

It carries out the reaction nicotinate + 5-phospho-alpha-D-ribose 1-diphosphate + ATP + H2O = nicotinate beta-D-ribonucleotide + ADP + phosphate + diphosphate. It participates in cofactor biosynthesis; NAD(+) biosynthesis; nicotinate D-ribonucleotide from nicotinate: step 1/1. Functionally, catalyzes the synthesis of beta-nicotinate D-ribonucleotide from nicotinate and 5-phospho-D-ribose 1-phosphate at the expense of ATP. The protein is Nicotinate phosphoribosyltransferase of Polaromonas sp. (strain JS666 / ATCC BAA-500).